Consider the following 503-residue polypeptide: MVSIRPDEISSIIRQQIEQYEQSIKVDNVGTVLQVGDGIARVYGLDKVMASELVEFEDGTVGIALNLEEDNVGVVLMGDGLSIEEGSTVRATGKIASIPVGEAAIGRVVDALMRPIDGKGEIHTTQSRLIESPAPGIVQRKSVCEPLQTGITAIDAMIPIGRGQRELIIGDRQTGKTAVAIDTILNQKGQDVICVYVAIGQKASSVAQVVNVLRERGALDYTIVIAANASDPAALQYLAPYTGATVAEYFMYQGKHTLVVYDDLSKQAQAYRQMSLLLRRPPGREAYPGDVFYLHSRLLERAAKLNDALGGGSMTALPVVETQAGDVSAYIPTNVISITDGQIFLSSDLFNAGLRPAINAGISVSRVGSAAQIKAMKQVAGKLKLELAQFDELQAFAQFASDLDKATQNQLARGQRLREILKQPQYSPIPVEYQVATIYAGTNGYLDDIPVEAVAKFVAGLRDYLRTNKPEYGEIIRTTQKLDEKAEALLKEAIAEYKATFTA.

170 to 177 (GDRQTGKT) is a binding site for ATP.

In terms of assembly, F-type ATPases have 2 components, CF(1) - the catalytic core - and CF(0) - the membrane proton channel. CF(1) has five subunits: alpha(3), beta(3), gamma(1), delta(1), epsilon(1). CF(0) has four main subunits: a(1), b(1), b'(1) and c(9-12).

The protein localises to the cellular thylakoid membrane. It carries out the reaction ATP + H2O + 4 H(+)(in) = ADP + phosphate + 5 H(+)(out). With respect to regulation, inhibited by dicyclohexylcarbodiimide. Functionally, produces ATP from ADP in the presence of a proton gradient across the membrane. The alpha chain is a regulatory subunit. The complex from the organism is particularly stable to disruption and remains functional after 6 hrs at 55 degrees Celsius. The sequence is that of ATP synthase subunit alpha from Thermosynechococcus vestitus (strain NIES-2133 / IAM M-273 / BP-1).